Here is a 384-residue protein sequence, read N- to C-terminus: MGLLCSKSNRYNDAKAEENAQTAEIERRIELETKAEKHIRKLLLLGAGESGKSTIFKQIKLLFQTGFDEAELKSYLPVVHANVYQTIKLLHDGSKEFAQNDVDFSKYVISTENKDIGEKLSEIGGRLDYPRLTKELAQEIESIWKDAAIQETYARGNELQVPDCTHYFMENLQRLSDANYVPTKEDVLLARVRTTGVVEIQFSPVGENKKSGEVYRLFDVGGQRNERRKWIHLFEGVSAVIFCVAISEYDQTLFEDENKNRMMETKELFEWVLKQQCFEKTSFMLFLNKFDIFEKKILDVPLNVCEWFKDYQPVSTGKQEIEHAYEFVKKKFEESYFQSTAPDSVDRVFKIYRTTALDQKVVKKTFKLVDETLRRRNLFEAGLL.

Gly2 carries the N-myristoyl glycine lipid modification. Cys5 carries S-palmitoyl cysteine lipidation. The 347-residue stretch at 38-384 folds into the G-alpha domain; that stretch reads HIRKLLLLGA…RRNLFEAGLL (347 aa). Residues 41–54 are G1 motif; that stretch reads KLLLLGAGESGKST. GTP is bound by residues Glu49, Ser50, Gly51, Lys52, Ser53, Thr54, Asp163, Leu188, Thr194, Gly222, Asn288, Lys289, Asp291, and Ala356. Ser53 contributes to the Mg(2+) binding site. The G2 motif stretch occupies residues 186 to 194; it reads DVLLARVRT. Residue Thr194 participates in Mg(2+) binding. The segment at 215–224 is G3 motif; that stretch reads YRLFDVGGQR. The tract at residues 284 to 291 is G4 motif; that stretch reads MLFLNKFD. The interval 354-359 is G5 motif; it reads TTALDQ.

The protein belongs to the G-alpha family. As to quaternary structure, g proteins are composed of 3 units; alpha, beta and gamma. The alpha chain contains the guanine nucleotide binding site. Mg(2+) is required as a cofactor.

Its function is as follows. Guanine nucleotide-binding proteins (G proteins) are involved as modulators or transducers in various transmembrane signaling systems. This chain is Guanine nucleotide-binding protein alpha-1 subunit (GPA1), found in Pisum sativum (Garden pea).